The chain runs to 251 residues: 3-deoxy-manno-octulosonate cytidylyltransferase (251 aa).

The protein belongs to the KdsB family.

The protein resides in the cytoplasm. It carries out the reaction 3-deoxy-alpha-D-manno-oct-2-ulosonate + CTP = CMP-3-deoxy-beta-D-manno-octulosonate + diphosphate. Its pathway is nucleotide-sugar biosynthesis; CMP-3-deoxy-D-manno-octulosonate biosynthesis; CMP-3-deoxy-D-manno-octulosonate from 3-deoxy-D-manno-octulosonate and CTP: step 1/1. It functions in the pathway bacterial outer membrane biogenesis; lipopolysaccharide biosynthesis. Functionally, activates KDO (a required 8-carbon sugar) for incorporation into bacterial lipopolysaccharide in Gram-negative bacteria. The protein is 3-deoxy-manno-octulosonate cytidylyltransferase of Rhizobium etli (strain CIAT 652).